The following is a 393-amino-acid chain: Major outer membrane porin, serovar L1 (393 aa).

The N-terminal stretch at 1–22 (MKKLLKSVLVFAALSSASSLQA) is a signal peptide.

Belongs to the chlamydial porin (CP) (TC 1.B.2) family. Part of a disulfide cross-linked outer membrane complex (COMC) composed of the major outer membrane porin (MOMP), the small cysteine-rich protein (OmcA) and the large cysteine-rich periplasmic protein (OmcB).

The protein resides in the cell outer membrane. In elementary bodies (EBs, the infectious stage, which is able to survive outside the host cell) provides the structural integrity of the outer envelope through disulfide cross-links with the small cysteine-rich protein and the large cysteine-rich periplasmic protein. It has been described in publications as the Sarkosyl-insoluble COMC (Chlamydia outer membrane complex), and serves as the functional equivalent of peptidoglycan. Functionally, permits diffusion of specific solutes through the outer membrane. The polypeptide is Major outer membrane porin, serovar L1 (ompA) (Chlamydia trachomatis).